Here is a 268-residue protein sequence, read N- to C-terminus: tRNA pseudouridine synthase A (268 aa).

Asp52 functions as the Nucleophile in the catalytic mechanism. Tyr113 is a substrate binding site.

It belongs to the tRNA pseudouridine synthase TruA family. Homodimer.

The catalysed reaction is uridine(38/39/40) in tRNA = pseudouridine(38/39/40) in tRNA. In terms of biological role, formation of pseudouridine at positions 38, 39 and 40 in the anticodon stem and loop of transfer RNAs. In Chlamydia felis (strain Fe/C-56) (Chlamydophila felis), this protein is tRNA pseudouridine synthase A.